The sequence spans 187 residues: Segregation and condensation protein B (187 aa).

It belongs to the ScpB family. Homodimer. Homodimerization may be required to stabilize the binding of ScpA to the Smc head domains. Component of a cohesin-like complex composed of ScpA, ScpB and the Smc homodimer, in which ScpA and ScpB bind to the head domain of Smc. The presence of the three proteins is required for the association of the complex with DNA.

It is found in the cytoplasm. Functionally, participates in chromosomal partition during cell division. May act via the formation of a condensin-like complex containing Smc and ScpA that pull DNA away from mid-cell into both cell halves. This chain is Segregation and condensation protein B, found in Agathobacter rectalis (strain ATCC 33656 / DSM 3377 / JCM 17463 / KCTC 5835 / VPI 0990) (Eubacterium rectale).